The primary structure comprises 989 residues: Zinc finger SWIM domain-containing protein 4 (989 aa).

Positions 1 to 32 (MEPPAAKRSRGCPAGPEERDAGAGAARGRGRP) are disordered. An SWIM-type zinc finger spans residues 139-176 (YHVSISFDRCKITSVSCGCDNRDLFYCAHVVALSLYRI).

The sequence is that of Zinc finger SWIM domain-containing protein 4 (ZSWIM4) from Homo sapiens (Human).